A 796-amino-acid polypeptide reads, in one-letter code: Lon protease 2 (796 aa).

The region spanning 9 to 206 (LPIVILKENV…KLIVNLSIEI (198 aa)) is the Lon N-terminal domain. 352 to 359 (GPPGIGKT) is an ATP binding site. One can recognise a Lon proteolytic domain in the interval 617–796 (IDSSGFVYGL…EEVFDYLNII (180 aa)). Catalysis depends on residues Ser-702 and Lys-745.

Belongs to the peptidase S16 family. In terms of assembly, homohexamer. Organized in a ring with a central cavity.

It localises to the cytoplasm. It carries out the reaction Hydrolysis of proteins in presence of ATP.. In terms of biological role, ATP-dependent serine protease that mediates the selective degradation of mutant and abnormal proteins as well as certain short-lived regulatory proteins. Required for cellular homeostasis and for survival from DNA damage and developmental changes induced by stress. Degrades polypeptides processively to yield small peptide fragments that are 5 to 10 amino acids long. Binds to DNA in a double-stranded, site-specific manner. The chain is Lon protease 2 (lon2) from Borreliella burgdorferi (strain ATCC 35210 / DSM 4680 / CIP 102532 / B31) (Borrelia burgdorferi).